Here is a 135-residue protein sequence, read N- to C-terminus: Mini-ribonuclease 3 (135 aa).

D17 is a catalytic residue.

This sequence belongs to the MrnC RNase family. As to quaternary structure, homodimer. Mg(2+) serves as cofactor.

The protein resides in the cytoplasm. Its function is as follows. Involved in correct processing of both the 5' and 3' ends of 23S rRNA precursor. Processes 30S rRNA precursor transcript even in absence of ribonuclease 3 (Rnc); Rnc processes 30S rRNA into smaller rRNA precursors. The sequence is that of Mini-ribonuclease 3 from Bacillus cereus (strain ATCC 14579 / DSM 31 / CCUG 7414 / JCM 2152 / NBRC 15305 / NCIMB 9373 / NCTC 2599 / NRRL B-3711).